The chain runs to 123 residues: Ribosome-binding factor A (123 aa).

Belongs to the RbfA family. As to quaternary structure, monomer. Binds 30S ribosomal subunits, but not 50S ribosomal subunits or 70S ribosomes.

It is found in the cytoplasm. One of several proteins that assist in the late maturation steps of the functional core of the 30S ribosomal subunit. Associates with free 30S ribosomal subunits (but not with 30S subunits that are part of 70S ribosomes or polysomes). Required for efficient processing of 16S rRNA. May interact with the 5'-terminal helix region of 16S rRNA. The sequence is that of Ribosome-binding factor A from Delftia acidovorans (strain DSM 14801 / SPH-1).